Consider the following 309-residue polypeptide: Homoserine kinase (309 aa).

91–101 provides a ligand contact to ATP; it reads PIGSGLGSSAC.

This sequence belongs to the GHMP kinase family. Homoserine kinase subfamily.

The protein resides in the cytoplasm. The enzyme catalyses L-homoserine + ATP = O-phospho-L-homoserine + ADP + H(+). It participates in amino-acid biosynthesis; L-threonine biosynthesis; L-threonine from L-aspartate: step 4/5. Catalyzes the ATP-dependent phosphorylation of L-homoserine to L-homoserine phosphate. This is Homoserine kinase from Salmonella paratyphi B (strain ATCC BAA-1250 / SPB7).